The sequence spans 685 residues: Sodium-dependent phosphate transporter 1 (685 aa).

6 helical membrane passes run 25–45, 66–86, 106–126, 162–182, 201–221, and 234–254; these read FLWM…SVGA, ACIL…AKVS, LMAG…AASF, IVLS…LLFY, ALPI…MYSG, and GIIL…WFFV. Residues 482–492 are compositionally biased toward acidic residues; it reads VEAEEQEEGSI. The disordered stretch occupies residues 482–513; that stretch reads VEAEEQEEGSIEDVATDRKSSSSSLEERHDQD. A compositionally biased stretch (basic and acidic residues) spans 496–513; it reads ATDRKSSSSSLEERHDQD. 4 consecutive transmembrane segments (helical) span residues 517 to 537, 565 to 585, 606 to 626, and 656 to 676; these read VSLL…FAHG, ATPI…LWVW, FSIE…GLPI, and IFLA…AIMA.

This sequence belongs to the inorganic phosphate transporter (PiT) (TC 2.A.20) family.

The protein localises to the cell membrane. It carries out the reaction 2 Na(+)(out) + phosphate(out) = 2 Na(+)(in) + phosphate(in). Functionally, sodium-phosphate symporter which preferentially transports the monovalent form of phosphate with a stoichiometry of two sodium ions per phosphate ion. The sequence is that of Sodium-dependent phosphate transporter 1 (slc20a1) from Xenopus tropicalis (Western clawed frog).